The primary structure comprises 590 residues: AT-rich interactive domain-containing protein 5A (590 aa).

The tract at residues 1–52 is disordered; sequence MAAPPAKGNTEQSEEGDLPQLPVSPKPDDEQSRSQSPTQLQDSPEAGGEQEE. The interval 1–294 is interaction with SOX9; that stretch reads MAAPPAKGNT…NKDIQDSPQN (294 aa). Serine 24 bears the Phosphoserine mark. Over residues 33–42 the composition is skewed to polar residues; that stretch reads RSQSPTQLQD. The region spanning 50-142 is the ARID domain; the sequence is QEEEQAFLVS…LVLPYVRHLK (93 aa). Residues lysine 80 and lysine 89 each participate in a glycyl lysine isopeptide (Lys-Gly) (interchain with G-Cter in ubiquitin) cross-link. Residues 141–229 form a disordered region; the sequence is LKGEDDKPLP…SGPSPPLTGA (89 aa). Over residues 160–186 the composition is skewed to basic and acidic residues; the sequence is MAKELRGDDGTTEKLKKAKDSEERRVE. Over residues 187–210 the composition is skewed to polar residues; sequence QTTPGKTKSDATGQTQLPCQGSSR. Residues serine 253 and serine 283 each carry the phosphoserine modification. Disordered stretches follow at residues 275–323, 367–402, and 419–443; these read EGCR…RMEA, GPPG…TRKR, and VPTE…RGLE. The segment covering 367 to 381 has biased composition (basic and acidic residues); sequence GPPGKEEGPTTKESH. Phosphoserine occurs at positions 433 and 458.

In terms of assembly, interacts with SOX9. Interacts with ESR1. Interacts with RORC. Phosphorylated by MAPK14 on serine residues involving a TLR4 signaling pathway upon lipopolysaccharide (LPS) stimulation leading to its ubiquitination and proteasomal degradation. In terms of processing, ubiquitinated leading to proteasomal degradation; involving WWP1 linked to MAPK14-mediated phosphorylation upon LPS stimulation. Expressed in T cells (at protein level). Expressed at high levels in cartilage, heart, testis and bone.

It is found in the nucleus. Functionally, DNA-binding protein that may regulate transcription and act as a repressor by binding to AT-rich stretches in the promoter region of target genes. May positively regulate chondrocyte-specific transcription such as of COL2A1 in collaboration with SOX9 and positively regulate histone H3 acetylation at chondrocyte-specific genes. May stimulate early-stage chondrocyte differentiation and inhibit later stage differention. Can repress ESR1-mediated transcriptional activation; proposed to act as corepressor for selective nuclear hormone receptors. As an RNA-binding protein, involved in the regulation of inflammatory response by stabilizing selective inflammation-related mRNAs, such as STAT3 and TBX21. Also stabilizes IL6 mRNA. Binds to stem loop structures located in the 3'UTRs of IL6, STAT3 and TBX21 mRNAs; at least for STAT3 prevents binding of ZC3H12A to the mRNA stem loop structure thus inhibiting its degradation activity. Contributes to elevated IL6 levels possibly implicated in autoimmunity processes. IL6-dependent stabilization of STAT3 mRNA may promote differentiation of naive CD4+ T-cells into T-helper Th17 cells. In CD4+ T-cells may also inhibit RORC-induced Th17 cell differentiation independently of IL6 signaling. Stabilization of TBX21 mRNA contributes to elevated interferon-gamma secretion in Th1 cells possibly implicated in the establishment of septic shock. Stabilizes TNFRSF4/OX40 mRNA by binding to the conserved stem loop structure in its 3'UTR; thereby competing with the mRNA-destabilizing functions of RC3H1 and endoribonuclease ZC3H12A. The protein is AT-rich interactive domain-containing protein 5A (Arid5a) of Mus musculus (Mouse).